Reading from the N-terminus, the 259-residue chain is Ubiquinone/menaquinone biosynthesis C-methyltransferase UbiE (259 aa).

Residues threonine 82, aspartate 103, asparagine 131–alanine 132, and serine 148 contribute to the S-adenosyl-L-methionine site.

This sequence belongs to the class I-like SAM-binding methyltransferase superfamily. MenG/UbiE family.

It catalyses the reaction a 2-demethylmenaquinol + S-adenosyl-L-methionine = a menaquinol + S-adenosyl-L-homocysteine + H(+). It carries out the reaction a 2-methoxy-6-(all-trans-polyprenyl)benzene-1,4-diol + S-adenosyl-L-methionine = a 5-methoxy-2-methyl-3-(all-trans-polyprenyl)benzene-1,4-diol + S-adenosyl-L-homocysteine + H(+). It participates in quinol/quinone metabolism; menaquinone biosynthesis; menaquinol from 1,4-dihydroxy-2-naphthoate: step 2/2. The protein operates within cofactor biosynthesis; ubiquinone biosynthesis. Its function is as follows. Methyltransferase required for the conversion of demethylmenaquinol (DMKH2) to menaquinol (MKH2) and the conversion of 2-polyprenyl-6-methoxy-1,4-benzoquinol (DDMQH2) to 2-polyprenyl-3-methyl-6-methoxy-1,4-benzoquinol (DMQH2). In Vibrio campbellii (strain ATCC BAA-1116), this protein is Ubiquinone/menaquinone biosynthesis C-methyltransferase UbiE.